Here is a 294-residue protein sequence, read N- to C-terminus: Large ribosomal subunit protein uL4m (294 aa).

Positions 120-139 (VRGGGRKPWQQKGSGRARHG) are disordered. At arginine 147 the chain carries Omega-N-methylarginine.

Belongs to the universal ribosomal protein uL4 family. Component of the mitochondrial ribosome large subunit (39S) which comprises a 16S rRNA and about 50 distinct proteins. Interacts with MIEF1 upstream open reading frame protein.

It localises to the mitochondrion. This is Large ribosomal subunit protein uL4m (MRPL4) from Bos taurus (Bovine).